The primary structure comprises 594 residues: Protein CBFA2T2 (594 aa).

At Ser-24 the chain carries Phosphoserine. Residue Lys-29 forms a Glycyl lysine isopeptide (Lys-Gly) (interchain with G-Cter in SUMO2) linkage. The segment at 48–96 (GGPRPVSFTPTALSNGINHSPPTLNGAPSPPQRFSNGPASSTSSALTNQ) is disordered. Composition is skewed to polar residues over residues 55-70 (FTPT…SPPT) and 79-96 (QRFS…LTNQ). The segment at 98–206 (LPATCGARQL…QHEHLLLNTS (109 aa)) is interaction with PRDM14. In terms of domain architecture, TAFH spans 104–199 (ARQLSKLKRF…TPSQYLAQHE (96 aa)). The tract at residues 220-257 (VHGNGKRPSPERRDENNFERDTVPPEPPAKRVCTISPA) is disordered. A compositionally biased stretch (basic and acidic residues) spans 227 to 242 (PSPERRDENNFERDTV). A Phosphoserine modification is found at Ser-255. Positions 322–368 (QDELVDHRLTEREWADEWKHLDHALNCIMEMVEKTRRSMAVLRRCQE) are nervy homology region 2 (NHR2). A disordered region spans residues 388–416 (RKTGTELVSRQHSPGSTDSLSNDSQREFT). The span at 393 to 410 (ELVSRQHSPGSTDSLSND) shows a compositional bias: polar residues. The residue at position 400 (Ser-400) is a Phosphoserine. The nervy homology region 3 (NHR3) stretch occupies residues 426-475 (VEFWKKTEEAVNKVKIQAMSEVQKAVAEAEQKAFEVIATERARMEQTIAD). Lys-440 participates in a covalent cross-link: Glycyl lysine isopeptide (Lys-Gly) (interchain with G-Cter in SUMO2). Residues 442 to 482 (QAMSEVQKAVAEAEQKAFEVIATERARMEQTIADVKRQAAE) adopt a coiled-coil conformation. Zn(2+) contacts are provided by Cys-498, Cys-501, Cys-509, Cys-512, Cys-518, Cys-522, His-530, and Cys-534. An MYND-type zinc finger spans residues 498 to 534 (CWNCGRKASETCSGCNIARYCGSFCQHKDWERHHRLC). The disordered stretch occupies residues 538–594 (LHGHSPHSQSRPLLPGGRGSARSADCSVPSPALDKTSATTSRSSTPASVTAIDANGL). Phosphoserine is present on Ser-567. Residues 573-588 (TSATTSRSSTPASVTA) are compositionally biased toward low complexity.

The protein belongs to the CBFA2T family. In terms of assembly, homooligomer. Homotetramerization is mediated by the NHR2 domain. Interacts with CBFA2T3/MTG16. Can interact with RUNX1T1/CBFA2T1. Heterotetramerization between members of the CBFA2T family is proposed. Interacts with RBP, GFI1, TCF4, PRDM14. Interacts with TAL1 and CBFA2T3/MTG16; the heteromer with CBFA2T3/MTG16 may function in repression of TAL1. Expressed in embryonic stem cells.

Its subcellular location is the nucleus. Its function is as follows. Transcriptional corepressor which facilitates transcriptional repression via its association with DNA-binding transcription factors and recruitment of other corepressors and histone-modifying enzymes. Via association with PRDM14 is involved in regulation of embryonic stem cell (ESC) pluripotency. Involved in primordial germ cell (PCG) formation. Stabilizes PRDM14 and OCT4 on chromatin in a homooligomerization-dependent mannerCan repress the expression of MMP7 in a ZBTB33-dependent manner. Through heteromerization with CBFA2T3/MTG16 may be involved in regulation of the proliferation and the differentiation of erythroid progenitors by repressing the expression of TAL1 target genes. Required for the maintenance of the secretory cell lineage in the small intestine. Can inhibit Notch signaling probably by association with RBPJ and may be involved in GFI1-mediated Paneth cell differentiation. The polypeptide is Protein CBFA2T2 (Cbfa2t2) (Mus musculus (Mouse)).